Here is a 398-residue protein sequence, read N- to C-terminus: Na(+)/H(+) antiporter NhaA (398 aa).

11 consecutive transmembrane segments (helical) span residues 19–39, 64–84, 99–119, 130–150, 159–179, 182–202, 222–242, 266–286, 299–319, 337–357, and 370–390; these read IGGI…NSPG, LLLW…GLEL, IILP…IYLA, GWAI…SLLG, ILLT…IACF, NDIY…LFIV, IAML…AMFI, ATFI…LTNI, IALG…WVGV, GMSA…SLAF, and LGII…LNKT.

The protein belongs to the NhaA Na(+)/H(+) (TC 2.A.33) antiporter family.

The protein localises to the cell inner membrane. The catalysed reaction is Na(+)(in) + 2 H(+)(out) = Na(+)(out) + 2 H(+)(in). Functionally, na(+)/H(+) antiporter that extrudes sodium in exchange for external protons. The sequence is that of Na(+)/H(+) antiporter NhaA from Desulfotalea psychrophila (strain LSv54 / DSM 12343).